The sequence spans 34 residues: Antimicrobial peptide Alo-1 (34 aa).

Cystine bridges form between C1–C18, C8–C22, and C17–C33.

It localises to the secreted. Functionally, has antifungal activity against C.glabrata. The polypeptide is Antimicrobial peptide Alo-1 (Acrocinus longimanus (Giant harlequin beetle)).